The chain runs to 894 residues: Coiled-coil domain-containing protein 39 (894 aa).

Coiled-coil stretches lie at residues 32-143 (TENE…DQFK), 187-411 (ALER…LKKE), 461-609 (VRSE…ELKE), and 647-788 (KAAQ…KLRQ). Residues 844-857 (GSNPPSLGGSRPGS) are compositionally biased toward low complexity. Residues 844–894 (GSNPPSLGGSRPGSARSQTSLGSVRSARSVASQQRGGMGGSPAVRTIQLGA) form a disordered region.

The protein belongs to the CCDC39 family. In terms of assembly, interacts with CCDC40/FAP172. In terms of processing, phosphorylated in flagella.

The protein localises to the cell projection. Its subcellular location is the cilium. The protein resides in the flagellum. In terms of biological role, required for assembly of dynein regulatory complex (DRC) and inner dynein arm complexes, which are responsible for ciliary beat regulation, by acting as a molecular ruler that determines the 96 nanometer (nm) repeat length and arrangements of components in cilia and flagella. Together with CCDC40/FAP172 forms a 96-nm-long complex in flagella. This complex does not act as a physical ruler, but rather act as a negative regulator for radial spokes: the complex lays along specific protofilaments, masking radial spoke binding sites and allowing recruitment of inner dynein arm (IDA) and nexin-dynein regulatory complexes (N-DRC). This is Coiled-coil domain-containing protein 39 (CCDC39) from Chlamydomonas reinhardtii (Chlamydomonas smithii).